Consider the following 145-residue polypeptide: D-aminoacyl-tRNA deacylase (145 aa).

The Gly-cisPro motif, important for rejection of L-amino acids signature appears at 137–138; sequence GP.

It belongs to the DTD family. Homodimer.

It localises to the cytoplasm. The catalysed reaction is glycyl-tRNA(Ala) + H2O = tRNA(Ala) + glycine + H(+). The enzyme catalyses a D-aminoacyl-tRNA + H2O = a tRNA + a D-alpha-amino acid + H(+). An aminoacyl-tRNA editing enzyme that deacylates mischarged D-aminoacyl-tRNAs. Also deacylates mischarged glycyl-tRNA(Ala), protecting cells against glycine mischarging by AlaRS. Acts via tRNA-based rather than protein-based catalysis; rejects L-amino acids rather than detecting D-amino acids in the active site. By recycling D-aminoacyl-tRNA to D-amino acids and free tRNA molecules, this enzyme counteracts the toxicity associated with the formation of D-aminoacyl-tRNA entities in vivo and helps enforce protein L-homochirality. The polypeptide is D-aminoacyl-tRNA deacylase (Shewanella piezotolerans (strain WP3 / JCM 13877)).